A 295-amino-acid chain; its full sequence is Shikimate dehydrogenase (NADP(+)) (295 aa).

Shikimate is bound by residues 21–23 (SLS) and Thr-68. Lys-72 acts as the Proton acceptor in catalysis. Shikimate-binding residues include Asn-93 and Asp-108. NADP(+) contacts are provided by residues 132 to 136 (GAGGA), 156 to 161 (NRTPER), and Leu-228. Tyr-230 provides a ligand contact to shikimate. Gly-251 is a binding site for NADP(+).

It belongs to the shikimate dehydrogenase family. In terms of assembly, homodimer.

It carries out the reaction shikimate + NADP(+) = 3-dehydroshikimate + NADPH + H(+). It participates in metabolic intermediate biosynthesis; chorismate biosynthesis; chorismate from D-erythrose 4-phosphate and phosphoenolpyruvate: step 4/7. In terms of biological role, involved in the biosynthesis of the chorismate, which leads to the biosynthesis of aromatic amino acids. Catalyzes the reversible NADPH linked reduction of 3-dehydroshikimate (DHSA) to yield shikimate (SA). The protein is Shikimate dehydrogenase (NADP(+)) of Moorella thermoacetica (strain ATCC 39073 / JCM 9320).